The chain runs to 220 residues: UPF0319 protein YccT (220 aa).

An N-terminal signal peptide occupies residues 1 to 20 (MKTGALATFLALCLPVTVFA).

This sequence belongs to the UPF0319 family.

The protein is UPF0319 protein YccT of Salmonella agona (strain SL483).